The primary structure comprises 861 residues: FO synthase (861 aa).

2 Radical SAM core domains span residues 69–319 (ITYS…LQAP) and 528–763 (VTYI…LLHP). A cofG-like region spans residues 70 to 401 (TYSKSVFIPL…PRLLPHVRAL (332 aa)). Cys-83, Cys-87, Cys-90, Cys-542, Cys-546, and Cys-549 together coordinate [4Fe-4S] cluster. Residues 505-838 (DGPALDALTR…KPRTTLYGEV (334 aa)) are cofH-like.

In the N-terminal section; belongs to the radical SAM superfamily. CofG family. This sequence in the C-terminal section; belongs to the radical SAM superfamily. CofH family. The cofactor is [4Fe-4S] cluster.

It carries out the reaction 5-amino-6-(D-ribitylamino)uracil + L-tyrosine + S-adenosyl-L-methionine = 5-amino-5-(4-hydroxybenzyl)-6-(D-ribitylimino)-5,6-dihydrouracil + 2-iminoacetate + 5'-deoxyadenosine + L-methionine + H(+). It catalyses the reaction 5-amino-5-(4-hydroxybenzyl)-6-(D-ribitylimino)-5,6-dihydrouracil + S-adenosyl-L-methionine = 7,8-didemethyl-8-hydroxy-5-deazariboflavin + 5'-deoxyadenosine + L-methionine + NH4(+) + H(+). Its pathway is cofactor biosynthesis; coenzyme F0 biosynthesis. Catalyzes the radical-mediated synthesis of 7,8-didemethyl-8-hydroxy-5-deazariboflavin (FO) from 5-amino-6-(D-ribitylamino)uracil and L-tyrosine. This is FO synthase (fbiC) from Streptomyces avermitilis (strain ATCC 31267 / DSM 46492 / JCM 5070 / NBRC 14893 / NCIMB 12804 / NRRL 8165 / MA-4680).